A 234-amino-acid polypeptide reads, in one-letter code: ILYNKDTDVVILPEMWNNGYALEQLEEKADFDLERSTDFIKNLALQYQVDIIAGSVSNKHHDHIFNTAFAIDKTGKVINQYDKMHLVPMLDEPAFLTAGKNVPETFKLSNGVKVTQMICYDLRFPELLRYPARSGATIAFYVAQWPSARLNHWQVLLKARAIENNMYVIGCNGCGYDGKTQYAGHSVAINPNGEIIQELSTTEKELTVTIDIDAVEQQRKAIPVFDSLVPHLYK.

The 212-residue stretch at 1-212 (ILYNKDTDVV…EKELTVTIDI (212 aa)) folds into the CN hydrolase domain. E14 (proton acceptor) is an active-site residue. Residue K83 is the Proton donor of the active site. C119 functions as the Nucleophile in the catalytic mechanism.

This sequence belongs to the carbon-nitrogen hydrolase superfamily. NIT1/NIT2 family.

The sequence is that of Hydrolase in agr operon from Staphylococcus lugdunensis.